Consider the following 335-residue polypeptide: Pyridoxal 5'-phosphate synthase subunit PdxS (335 aa).

Residue D30 participates in D-ribose 5-phosphate binding. K87 (schiff-base intermediate with D-ribose 5-phosphate) is an active-site residue. D-ribose 5-phosphate is bound at residue G159. Residue R171 coordinates D-glyceraldehyde 3-phosphate. Residues G257 and 278–279 each bind D-ribose 5-phosphate; that span reads GS.

It belongs to the PdxS/SNZ family. In terms of assembly, in the presence of PdxT, forms a dodecamer of heterodimers.

It catalyses the reaction aldehydo-D-ribose 5-phosphate + D-glyceraldehyde 3-phosphate + L-glutamine = pyridoxal 5'-phosphate + L-glutamate + phosphate + 3 H2O + H(+). Its pathway is cofactor biosynthesis; pyridoxal 5'-phosphate biosynthesis. Its function is as follows. Catalyzes the formation of pyridoxal 5'-phosphate from ribose 5-phosphate (RBP), glyceraldehyde 3-phosphate (G3P) and ammonia. The ammonia is provided by the PdxT subunit. Can also use ribulose 5-phosphate and dihydroxyacetone phosphate as substrates, resulting from enzyme-catalyzed isomerization of RBP and G3P, respectively. The polypeptide is Pyridoxal 5'-phosphate synthase subunit PdxS (Thermococcus onnurineus (strain NA1)).